The chain runs to 249 residues: 6-phosphogluconolactonase 3 (249 aa).

The protein belongs to the glucosamine/galactosamine-6-phosphate isomerase family. 6-phosphogluconolactonase subfamily.

The protein resides in the cytoplasm. It is found in the nucleus. The catalysed reaction is 6-phospho-D-glucono-1,5-lactone + H2O = 6-phospho-D-gluconate + H(+). It participates in carbohydrate degradation; pentose phosphate pathway; D-ribulose 5-phosphate from D-glucose 6-phosphate (oxidative stage): step 2/3. In terms of biological role, hydrolysis of 6-phosphogluconolactone to 6-phosphogluconate. This chain is 6-phosphogluconolactonase 3 (SOL3), found in Saccharomyces cerevisiae (strain RM11-1a) (Baker's yeast).